Here is an 83-residue protein sequence, read N- to C-terminus: MSSGGLLLLLGLLTLWAELTPVSSKDRPEICKLPKEPGPCRSYLLYFYYNSVEHKCQTFHYGGCEGNENRFHTIEECKSTCAA.

An N-terminal signal peptide occupies residues 1-24 (MSSGGLLLLLGLLTLWAELTPVSS). The BPTI/Kunitz inhibitor domain maps to 31-81 (CKLPKEPGPCRSYLLYFYYNSVEHKCQTFHYGGCEGNENRFHTIEECKSTC). Cystine bridges form between Cys31-Cys81, Cys40-Cys64, and Cys56-Cys77.

Belongs to the venom Kunitz-type family. As to expression, expressed by the venom gland.

It is found in the secreted. Functionally, serine protease inhibitor. In Demansia vestigiata (Lesser black whip snake), this protein is Kunitz-type serine protease inhibitor vestiginin-7.